A 394-amino-acid chain; its full sequence is MNLLATLERGLADIDAQGLRRRRRIADTACSAHMSVDGREIVGFASNDYLGLAAHPRLIEAFAEGARRYGAGSGGSHLLGGHSRAHAALEDELAAFSGGFSDAPRALYFSTGYMANLAALTALAGRGATIFSDALNHASLIDGTRLSRANVQVYPHGDADALDALLRACDAPTKLIVSDTVFSMDGDVAPLARLVALAEAHGAWLVVDDAHGFGVLGPQGRGALAAHGLRSPNLVYVGTLGKAAGAAGAFIVAHETVIEWLVQRARSYIFTTAAPPSVACAVSASLAVIASDEGDARRAHLAALIERTRAILRATPWQPVDSHTAVQPLVIGSNEATLAAMAALDAQGLWVPAIRPPTVPAGTSRLRISLSAAHSFADLARLEAALVTPIEAAA.

Arginine 21 serves as a coordination point for substrate. 112 to 113 (GY) serves as a coordination point for pyridoxal 5'-phosphate. A substrate-binding site is contributed by histidine 137. Pyridoxal 5'-phosphate is bound by residues serine 183, histidine 211, and threonine 239. Lysine 242 carries the post-translational modification N6-(pyridoxal phosphate)lysine. Threonine 358 serves as a coordination point for substrate.

This sequence belongs to the class-II pyridoxal-phosphate-dependent aminotransferase family. BioF subfamily. As to quaternary structure, homodimer. Pyridoxal 5'-phosphate serves as cofactor.

The catalysed reaction is 6-carboxyhexanoyl-[ACP] + L-alanine + H(+) = (8S)-8-amino-7-oxononanoate + holo-[ACP] + CO2. Its pathway is cofactor biosynthesis; biotin biosynthesis. In terms of biological role, catalyzes the decarboxylative condensation of pimeloyl-[acyl-carrier protein] and L-alanine to produce 8-amino-7-oxononanoate (AON), [acyl-carrier protein], and carbon dioxide. The chain is 8-amino-7-oxononanoate synthase from Burkholderia thailandensis (strain ATCC 700388 / DSM 13276 / CCUG 48851 / CIP 106301 / E264).